A 453-amino-acid chain; its full sequence is Choline kinase alpha (453 aa).

The interval 22–81 (CGGSAAPTPGVGQQRDAAGELESKQLGGRSQPLALPPPPPPPLPLPPPPSPPLADEQPEP) is disordered. The segment covering 55-73 (ALPPPPPPPLPLPPPPSPP) has biased composition (pro residues). Ser-71 is modified (phosphoserine). ATP-binding positions include 113 to 119 (RGGLSNM), Arg-142, and 203 to 209 (QFIPSRR). A phosphocholine-binding site is contributed by 115 to 117 (GLS). At Lys-243 the chain carries N6-acetyllysine. Ser-275 carries the post-translational modification Phosphoserine. Residues Gln-304 and Asp-326 each coordinate ATP.

This sequence belongs to the choline/ethanolamine kinase family. Heterodimer with CHKB. Homodimer. In terms of assembly, monomer; acetylation by KAT5 promotes dissociation of the homodimer and monomerization. Post-translationally, phosphorylated at Ser-275 by AMPK in response to glucose deprivation, leading to localization to lipid droplets. Acetylated by KAT5 at Lys-243 following phosphorylation by AMPK, leading to monomerization and conversion into a tyrosine-protein kinase. Testis, brain, lung, kidney and liver.

It is found in the cytoplasm. Its subcellular location is the cytosol. The protein resides in the lipid droplet. It catalyses the reaction choline + ATP = phosphocholine + ADP + H(+). The enzyme catalyses ethanolamine + ATP = phosphoethanolamine + ADP + H(+). It carries out the reaction L-tyrosyl-[protein] + ATP = O-phospho-L-tyrosyl-[protein] + ADP + H(+). The protein operates within phospholipid metabolism; phosphatidylcholine biosynthesis; phosphocholine from choline: step 1/1. It functions in the pathway phospholipid metabolism; phosphatidylethanolamine biosynthesis; phosphatidylethanolamine from ethanolamine: step 1/3. In terms of biological role, plays a key role in phospholipid biosynthesis by catalyzing the phosphorylation of free choline to phosphocholine, the first step in phosphatidylcholine biosynthesis. Also phosphorylates ethanolamine, thereby contributing to phosphatidylethanolamine biosynthesis. Has higher activity with choline. Its function is as follows. This isoform plays a key role in lipolysis of lipid droplets following glucose deprivation. In response to glucose deprivation, phosphorylated by AMPK, promoting localization to lipid droplets. Phosphorylation is followed by acetylation by KAT5, leading to dissociation of the homodimer into a monomer. Monomeric CHKA isoform 1 is converted into a tyrosine-protein kinase, which phosphorylates lipid droplet structural proteins PLIN2 and PLIN3, leading to lipolysis of lipid droplets. This Rattus norvegicus (Rat) protein is Choline kinase alpha (Chka).